The following is a 144-amino-acid chain: Interleukin-9 (144 aa).

Positions M1–G18 are cleaved as a signal peptide. Q19 is subject to Pyrrolidone carboxylic acid. N-linked (GlcNAc...) asparagine glycans are attached at residues N50, N78, N101, and N114.

This sequence belongs to the IL-7/IL-9 family. In terms of assembly, interacts with IL9R. Interacts with IL2RG.

It localises to the secreted. In terms of biological role, multifunctional cytokine secreted mainly by T-helper 2 lymphocytes and also mast cells or NKT cells that plays important roles in the immune response against parasites. Affects intestinal epithelial permeability and adaptive immunity. In addition, induces the differentiation of specific T-cell subsets such as IL-17 producing helper T-cells (TH17) and also proliferation and differentiation of mast cells. Mechanistically, exerts its biological effects through a receptor composed of IL9R subunit and a signal transducing subunit IL2RG. Receptor stimulation results in the rapid activation of JAK1 and JAK3 kinase activities leading to STAT1, STAT3 and STAT5-mediated transcriptional programs. Induction of differentiation genes seems to be mediated by STAT1 alone, while protection of cells from apoptosis depends on STAT3 and STAT5. The sequence is that of Interleukin-9 (Il9) from Mus musculus (Mouse).